The sequence spans 440 residues: Thymidine phosphorylase (440 aa).

It belongs to the thymidine/pyrimidine-nucleoside phosphorylase family. Homodimer.

It catalyses the reaction thymidine + phosphate = 2-deoxy-alpha-D-ribose 1-phosphate + thymine. The protein operates within pyrimidine metabolism; dTMP biosynthesis via salvage pathway; dTMP from thymine: step 1/2. The enzymes which catalyze the reversible phosphorolysis of pyrimidine nucleosides are involved in the degradation of these compounds and in their utilization as carbon and energy sources, or in the rescue of pyrimidine bases for nucleotide synthesis. The sequence is that of Thymidine phosphorylase from Salmonella agona (strain SL483).